The following is a 486-amino-acid chain: MTKTDVQMLKNYIGGQWIEAETSQTEAVYNPATGKIIAEVPLSTKKDVERAVQAAQEAFTTWSKTPVPRRARILFKYQQLLVDKWDELAELVTMENGKSITEAKGEVQRGIECVEFAAGAPTLMMGKQLPDIASGLESGMYRYPIGVIGGITPFNFPMMVPCWMFPLAIACGNTFVLKPSERTPILAARLAELFEEAGLPKGVLNIVNGAHDVVNGLLEHQKVKAISFVGSQPVAEYVYKKGTEHGKRVQALAGAKNHSIVLKDADLDAATKQIIGAAFGSAGERCMAAAVVAVEEEVADDLIQKLVDESNELVIGNGINEEVFLGPVIREEHKERTLQYIQSGIEEGASLIRDGRKDHETNGKGYFVGPTIFDHVTNQMKIWQDEIFAPVLSIVRVSSLAEAIDLSNQSKFANGACLYTDSASSIREFRENIEAGMLGVNIGVPAPMAFFPFSGWKDSFYGDLHANGTDGVEFYTRKKMVTARYM.

Residues F154, K178, E181, R182, and S231 each coordinate NAD(+). C286 serves as the catalytic Nucleophile. NAD(+) is bound at residue E386.

It belongs to the aldehyde dehydrogenase family. IolA subfamily. In terms of assembly, homotetramer.

It carries out the reaction 3-oxopropanoate + NAD(+) + CoA + H2O = hydrogencarbonate + acetyl-CoA + NADH + H(+). The enzyme catalyses 2-methyl-3-oxopropanoate + NAD(+) + CoA + H2O = propanoyl-CoA + hydrogencarbonate + NADH + H(+). It functions in the pathway polyol metabolism; myo-inositol degradation into acetyl-CoA; acetyl-CoA from myo-inositol: step 7/7. Functionally, catalyzes the oxidation of malonate semialdehyde (MSA) and methylmalonate semialdehyde (MMSA) into acetyl-CoA and propanoyl-CoA, respectively. Is involved in a myo-inositol catabolic pathway. Bicarbonate, and not CO2, is the end-product of the enzymatic reaction. The chain is Malonate-semialdehyde dehydrogenase from Bacillus pumilus (strain SAFR-032).